Here is a 383-residue protein sequence, read N- to C-terminus: uncharacterized protein (383 aa).

Helical transmembrane passes span 49 to 69 and 347 to 367; these read VDLLAAVQASVEPAALIGCVA and LLGGIPLAGFFAAGEIGPVAG.

The protein to M.tuberculosis Rv0874c.

The protein localises to the cell membrane. This is an uncharacterized protein from Mycobacterium tuberculosis (strain CDC 1551 / Oshkosh).